Reading from the N-terminus, the 155-residue chain is UPF0461 protein C5orf24 homolog (155 aa).

The span at 1 to 10 (MMHPVASSNP) shows a compositional bias: polar residues. The tract at residues 1–20 (MMHPVASSNPAFCGPGKPSC) is disordered. Position 37 is a phosphoserine (Ser-37). The interval 40-155 (SKYSHTVNHK…QQAFRCSSDA (116 aa)) is disordered. Residues 57 to 70 (DPLNETHLQTTSGR) are compositionally biased toward polar residues. Lys-75 is covalently cross-linked (Glycyl lysine isopeptide (Lys-Gly) (interchain with G-Cter in SUMO2)). Over residues 80-92 (KKKNLNRSGKRGR) the composition is skewed to basic residues. Residues 94–107 (SGTTKSAGYRTSTG) show a composition bias toward polar residues. Ser-121 is modified (phosphoserine).

This sequence belongs to the UPF0461 family.

This is UPF0461 protein C5orf24 homolog from Pongo abelii (Sumatran orangutan).